Here is a 298-residue protein sequence, read N- to C-terminus: MNALTLPDIARQTTTADLPLDWVGMQGIALPVQIGGQRVAAEADAGVSLDDPQARGIHMSRLYLALAELEQGELDLSRLRAVLQRFLDSHAGLSRRAYLRLRLAPLLRRPALVSPLSGWKRYPLVLDTRLEGDDFQAEVHLELTYSSTCPCSAALARQLIQERFDQDFAGQPLDHASVLAWLGSSAGIVATPHSQRSSAHLRIGLAEDCIGLPLEELADLGESALGTAVQTAVKRADEQAFALANGQNLMFCEDAVRRLHRALQGYPQASRFSIRVVHAESLHAHDAVAESHWQRGAA.

The protein belongs to the GTP cyclohydrolase IV family.

The enzyme catalyses GTP + H2O = 7,8-dihydroneopterin 3'-triphosphate + formate + H(+). Its pathway is cofactor biosynthesis; 7,8-dihydroneopterin triphosphate biosynthesis; 7,8-dihydroneopterin triphosphate from GTP: step 1/1. Functionally, converts GTP to 7,8-dihydroneopterin triphosphate. In Pseudomonas aeruginosa (strain UCBPP-PA14), this protein is GTP cyclohydrolase FolE2.